The primary structure comprises 237 residues: Demethylmenaquinone methyltransferase (237 aa).

S-adenosyl-L-methionine is bound by residues T58, D79, and 106-107 (NA).

Belongs to the class I-like SAM-binding methyltransferase superfamily. MenG/UbiE family.

The catalysed reaction is a 2-demethylmenaquinol + S-adenosyl-L-methionine = a menaquinol + S-adenosyl-L-homocysteine + H(+). Its pathway is quinol/quinone metabolism; menaquinone biosynthesis; menaquinol from 1,4-dihydroxy-2-naphthoate: step 2/2. Its function is as follows. Methyltransferase required for the conversion of demethylmenaquinol (DMKH2) to menaquinol (MKH2). In Bacillus anthracis (strain A0248), this protein is Demethylmenaquinone methyltransferase.